Consider the following 175-residue polypeptide: Major oleosin NAP-II (175 aa).

A polar region spans residues 1 to 47 (RRDQYPRDRDQYSMIGRDRDKYSMIGRDRDQYNMYGRDYSKSRQIAK). Repeats lie at residues 17 to 26 (RDRDKYSMIG) and 27 to 36 (RDRDQYNMYG). Residues 48–119 (AVTAVTAGGS…AAITVFSWIY (72 aa)) form a hydrophobic region. A run of 3 helical transmembrane segments spans residues 56–76 (GSLL…LTVA), 78–98 (PLLV…ALLI), and 99–119 (TGFL…SWIY). Residues 151–175 (AQYYGQQQTGGEDDRDRTRGTQHTT) form a disordered region.

The protein belongs to the oleosin family.

It is found in the lipid droplet. Its subcellular location is the membrane. In terms of biological role, may have a structural role to stabilize the lipid body during desiccation of the seed by preventing coalescence of the oil. Probably interacts with both lipid and phospholipid moieties of lipid bodies. May also provide recognition signals for specific lipase anchorage in lipolysis during seedling growth. The polypeptide is Major oleosin NAP-II (Brassica napus (Rape)).